Consider the following 86-residue polypeptide: Weak neurotoxin 5 (86 aa).

The N-terminal stretch at 1–21 (MKTLLLTLVVVTIVCLDLGYT) is a signal peptide. 5 cysteine pairs are disulfide-bonded: cysteine 24-cysteine 45, cysteine 27-cysteine 32, cysteine 38-cysteine 63, cysteine 67-cysteine 78, and cysteine 79-cysteine 84.

Belongs to the three-finger toxin family. Ancestral subfamily. Orphan group II sub-subfamily. In terms of tissue distribution, expressed by the venom gland.

Its subcellular location is the secreted. Functionally, binds with low affinity to muscular and very low affinity to neuronal (alpha-7/CHRNA7) nicotinic acetylcholine receptor (nAChR). The sequence is that of Weak neurotoxin 5 from Naja sputatrix (Malayan spitting cobra).